A 1171-amino-acid chain; its full sequence is 7,8-linoleate diol synthase (1171 aa).

The segment covering 1 to 22 (MASSSSSGSSTRSSSPSDPPSS) has biased composition (low complexity). A disordered region spans residues 1–56 (MASSSSSGSSTRSSSPSDPPSSFFQKLGAFLGLFSKPQPPRPDYPHAPGNSAREEQ). A fatty acid alpha-dioxygenase region spans residues 114-457 (TDGLITGLWE…DGSFEDEGLI (344 aa)). Residue His213 coordinates heme b. Ca(2+) contacts are provided by Asp214, Ser229, Tyr231, Asp233, and Ser235. Tyr385 is an active-site residue. His388 contacts heme b. The interval 675–1171 (KILNNQKDFK…PMNMKIRWDD (497 aa)) is epoxy alcohol synthase. The interval 873–900 (GLANGGANGHANGNANGHTNGNGIHQNG) is disordered. Residues 881–895 (GHANGNANGHTNGNG) show a composition bias toward low complexity. Residue Cys1089 participates in heme binding.

This sequence in the N-terminal section; belongs to the peroxidase family. The protein in the C-terminal section; belongs to the cytochrome P450 family. In terms of assembly, homotetramer. Heme b serves as cofactor. The cofactor is Ca(2+). It depends on heme as a cofactor.

It catalyses the reaction (9Z,12Z)-octadecadienoate + O2 = (8R,9Z,12Z)-8-hydroperoxyoctadeca-9,12-dienoate. The enzyme catalyses (8R,9Z,12Z)-8-hydroperoxyoctadeca-9,12-dienoate = (7S,8S,9Z,12Z)-7,8-dihydroxyoctadeca-9,12-dienoate. Its function is as follows. 7,8-linoleate diol synthase is a bifunctional enzyme that converts linoleic acid (18:2n-6) into 8-hydroperoxy-8(E),12(Z)-octadecadienoic acid (8-HPODE) and then catalyzes the isomerization of the resulting hydroperoxide to 7,8-dihydroxy-9(Z),12(Z)-octadecadienoic acid (7,8-DiHODE). This is 7,8-linoleate diol synthase from Pyricularia oryzae (strain 70-15 / ATCC MYA-4617 / FGSC 8958) (Rice blast fungus).